We begin with the raw amino-acid sequence, 178 residues long: Endothelin-2 (178 aa).

A signal peptide spans 1 to 24 (MPAPGVHHPNTASPFLKTVAAGKG). Residues 25 to 46 (QVAAAPEHPAPSARARGSHLRP) constitute a propeptide that is removed on maturation. 2 disulfides stabilise this stretch: Cys-49–Cys-63 and Cys-51–Cys-59. A propeptide spanning residues 70-178 (VNTPGQTAPY…RPTHPRRRKR (109 aa)) is cleaved from the precursor. The segment at 96-111 (CECSSGGDPACATFCH) is endothelin-like. Positions 156–178 (RFPRRPQEAGRQLRPTHPRRRKR) are disordered. The segment covering 169–178 (RPTHPRRRKR) has biased composition (basic residues).

It belongs to the endothelin/sarafotoxin family.

It localises to the secreted. Functionally, endothelins are endothelium-derived vasoconstrictor peptides. This Canis lupus familiaris (Dog) protein is Endothelin-2 (EDN2).